The sequence spans 578 residues: Protein RIK (578 aa).

The tract at residues 1–34 (MTEDNDEARVPLSDSSTTNDASRTRQRRKRKWDK) is disordered. The KH domain occupies 206–273 (SSNVAARIRG…KSIDDAKRLA (68 aa)). A compositionally biased stretch (polar residues) spans 413–425 (ATSLSIPSDNASN). The interval 413–578 (ATSLSIPSDN…DPDEPLTTRS (166 aa)) is disordered. Over residues 472–492 (PPSPRSVMPPPPPKTIAPPPS) the composition is skewed to pro residues. Composition is skewed to low complexity over residues 493–503 (KTMSPPSSKSM) and 510–521 (SKTMSPLSSKSM). Residues 560-572 (YGDDEDDDDDPDE) are compositionally biased toward acidic residues.

In terms of assembly, interacts with AS1. As to expression, expressed in vegetative tissues.

The protein localises to the nucleus. The sequence is that of Protein RIK (RIK) from Arabidopsis thaliana (Mouse-ear cress).